A 461-amino-acid polypeptide reads, in one-letter code: MKDQVKQIHFVGIGGVGMAGIAEVCLNLGFTVSGSDLKENPTVRHLISLGALIQFNHDASHVKNSDVVVVSTAIAKDNPEVCFAKESRIPVIPRAAMLAELMRMRFGIAIAGTHGKTTTTSLASAILTEGGLDPTFVIGGKLNQFDSNARLGSSQYLIAEADESDASFLHLSPMMSVVTNIDEDHMETYQGDYANLEQTFIEFIHRLPFYGVAIVCIDDQNIQNMLPKLSRKIRTYGFSESADIRATEVLHQGLSMHFNVKANDLPEFSVVLNQPGKHNVLNALAAITVALELDVSIESIQKALAGFGGVGRRFEVYPSRSIGHKNVTLVDDYGHHPTELEATLSTARMAFPEKRLVLVFQPHRYSRTRDLFDEFVQALQHADLLVLLDVYPAGEAPIAAFDSKALLQAMRLRGHKENLHVESQQQLNELTETLLLDDDVVLVMGAGDVGQLARDWKQQAY.

112 to 118 (GTHGKTT) is a binding site for ATP.

This sequence belongs to the MurCDEF family.

It localises to the cytoplasm. It carries out the reaction UDP-N-acetyl-alpha-D-muramate + L-alanine + ATP = UDP-N-acetyl-alpha-D-muramoyl-L-alanine + ADP + phosphate + H(+). It participates in cell wall biogenesis; peptidoglycan biosynthesis. In terms of biological role, cell wall formation. This is UDP-N-acetylmuramate--L-alanine ligase from Hydrogenovibrio crunogenus (strain DSM 25203 / XCL-2) (Thiomicrospira crunogena).